The sequence spans 90 residues: MSAEFDERVMTVPLRDVLAESKGQRADKAMSLVRSHLAQHFNVEEDAVRLDPSINEAVWERGRSKPPSELRVRAARFEEEGEAVVEAETA.

The protein belongs to the eukaryotic ribosomal protein eL31 family.

This is Large ribosomal subunit protein eL31 from Natronomonas pharaonis (strain ATCC 35678 / DSM 2160 / CIP 103997 / JCM 8858 / NBRC 14720 / NCIMB 2260 / Gabara) (Halobacterium pharaonis).